Here is a 974-residue protein sequence, read N- to C-terminus: Villin-4 (974 aa).

Gelsolin-like repeat units follow at residues 29-79, 150-190, 262-305, 394-451, 532-572, and 634-675; these read FIPT…DEAG, VHVK…QERA, GQAN…DDRK, LQVW…EERG, MQAI…TDQE, and LKVT…KNKL. The interval 738-783 is disordered; it reads VKNGGTPVADKPKRRTPASYGGRASVPDKSQQRSRSMSFSPDRVRV. Phosphoserine occurs at positions 777 and 787. Disordered stretches follow at residues 801–833 and 845–930; these read NARN…APKS and KIPP…PVSD. Over residues 824–833 the composition is skewed to low complexity; it reads SSKFAPAPKS. Over residues 872-887 the composition is skewed to basic and acidic residues; that stretch reads NSKEQEEKKENDKEEG. Positions 888–898 are enriched in polar residues; the sequence is SMSSRIESLTI. Ser-890 is subject to Phosphoserine. Positions 909 to 974 constitute an HP domain; sequence EEDLPAHPYD…NKFKMAVQLF (66 aa). The span at 912-921 shows a compositional bias: basic and acidic residues; it reads LPAHPYDRLK.

Belongs to the villin/gelsolin family. In terms of tissue distribution, preferentially expressed in vegetative tissues. Detected in the whole seedling, hypocotyl, cotyledon, primary root, roots hair cells and trichomes. Expressed in flowers but not in the silique.

It localises to the cytoplasm. Its subcellular location is the cytoskeleton. In terms of biological role, binds actin and actin filament bundles in a Ca(2+)-insensitive manner, but caps the barbed end of actin filaments and is able to sever them in a calcium-dependent manner. Involved in root hair growth through regulating actin organization in a Ca(2+)-dependent manner. The chain is Villin-4 from Arabidopsis thaliana (Mouse-ear cress).